The primary structure comprises 287 residues: MTVSDSPAQRQTPPQTPGGTAPRARTAAFFDLDKTIIAKSSTLAFSKPFFAQGLLNRRAVLKSSYAQFIFLLSGADHDQMDRMRTHLTNMCAGWDVAQVRSIVNETLHDIVTPLVFAEAADLIAAHKLCGRDVVVVSASGEEIVGPIARALGATHAMATRMIVEDGKYTGEVAFYCYGEGKAQAIRELAASEGYPLEHCYAYSDSITDLPMLEAVGHASVVNPDRGLRKEASVRGWPVLSFSRPVSLRDRIPAPSAAAIATTAAVGISALAAGAVTYALLRRFAFQP.

Residues Met1–Arg23 form a disordered region. Residues Pro7–Arg23 are compositionally biased toward low complexity. Mg(2+) contacts are provided by Asp31, Asp33, and Asp204.

This sequence belongs to the HAD-like hydrolase superfamily. SerB family.

This is an uncharacterized protein from Mycobacterium tuberculosis (strain CDC 1551 / Oshkosh).